Here is a 121-residue protein sequence, read N- to C-terminus: Protein yippee-like At3g55890 (121 aa).

Positions 12 to 109 constitute a Yippee domain; sequence NIYICKLCKT…LELYKISGPH (98 aa). Zn(2+) is bound by residues Cys-16, Cys-19, Cys-72, and Cys-75.

Belongs to the yippee family.

The sequence is that of Protein yippee-like At3g55890 from Arabidopsis thaliana (Mouse-ear cress).